Reading from the N-terminus, the 105-residue chain is MDKFYNYNSSSHQALLSFKVKPNSKQNLISNFVIINNIQYLKLSIKAIPEQGKANAEIINYLAKEWKLSRSNIEIIKGHTHSLKTILIKNINEDYLNLIINSYIK.

This sequence belongs to the UPF0235 family.

This chain is UPF0235 protein RrIowa_1526, found in Rickettsia rickettsii (strain Iowa).